The chain runs to 342 residues: Protein-ribulosamine 3-kinase, chloroplastic (342 aa).

A chloroplast-targeting transit peptide spans 1-46; that stretch reads MANVALLSAASPSTSSAAPRLRHVARRRPSRRSACPRSAASRLSIM. 141–143 is a binding site for ATP; the sequence is EFI. Aspartate 246 serves as the catalytic Proton acceptor.

It belongs to the fructosamine kinase family.

It is found in the plastid. The protein resides in the chloroplast. It catalyses the reaction N(6)-D-ribulosyl-L-lysyl-[protein] + ATP = N(6)-(3-O-phospho-D-ribulosyl)-L-lysyl-[protein] + ADP + H(+). The catalysed reaction is N(6)-(D-erythrulosyl)-L-lysyl-[protein] + ATP = N(6)-(3-O-phospho-D-erythrulosyl)-L-lysyl-[protein] + ADP + H(+). Functionally, initiates a process leading to the deglycation of proteins. Phosphorylates low-molecular-mass and protein-bound erythrulosamines and ribulosamines, but not fructosamines or psicosamines, on the third carbon of the sugar moiety. Protein-bound erythrulosamine 3-phosphates and ribulosamine 3-phosphates are unstable and decompose under physiological conditions. The sequence is that of Protein-ribulosamine 3-kinase, chloroplastic from Oryza sativa subsp. japonica (Rice).